Consider the following 42-residue polypeptide: Histone H1B (42 aa).

Residues 1 to 42 form the H15 domain; the sequence is TYYELIKAAILALKERNGSSAQAIKKYILENNKIEFQQTFLR.

This sequence belongs to the histone H1/H5 family.

The protein resides in the nucleus. The protein localises to the chromosome. Its function is as follows. Histones H1 are necessary for the condensation of nucleosome chains into higher-order structures. The chain is Histone H1B from Olisthodiscus luteus (Marine phytoflagellate).